We begin with the raw amino-acid sequence, 410 residues long: LL-diaminopimelate aminotransferase (410 aa).

Substrate is bound by residues tyrosine 15 and glycine 42. Pyridoxal 5'-phosphate-binding positions include tyrosine 72, 108–109 (TK), tyrosine 132, asparagine 186, tyrosine 217, and 245–247 (SFS). Residues lysine 109, tyrosine 132, and asparagine 186 each coordinate substrate. Residue lysine 248 is modified to N6-(pyridoxal phosphate)lysine. Pyridoxal 5'-phosphate is bound by residues arginine 256 and asparagine 291. The substrate site is built by asparagine 291 and arginine 387.

This sequence belongs to the class-I pyridoxal-phosphate-dependent aminotransferase family. LL-diaminopimelate aminotransferase subfamily. Homodimer. Pyridoxal 5'-phosphate is required as a cofactor.

The enzyme catalyses (2S,6S)-2,6-diaminopimelate + 2-oxoglutarate = (S)-2,3,4,5-tetrahydrodipicolinate + L-glutamate + H2O + H(+). Its pathway is amino-acid biosynthesis; L-lysine biosynthesis via DAP pathway; LL-2,6-diaminopimelate from (S)-tetrahydrodipicolinate (aminotransferase route): step 1/1. Functionally, involved in the synthesis of meso-diaminopimelate (m-DAP or DL-DAP), required for both lysine and peptidoglycan biosynthesis. Catalyzes the direct conversion of tetrahydrodipicolinate to LL-diaminopimelate. The sequence is that of LL-diaminopimelate aminotransferase from Lawsonia intracellularis (strain PHE/MN1-00).